We begin with the raw amino-acid sequence, 817 residues long: Rho GTPase-activating protein gacII (817 aa).

A Rho-GAP domain is found at 20–204 (TTIVKIGTPK…TLIEEFQYIS (185 aa)). The region spanning 238-298 (EDYLIAKANT…SQTYVDIIDI (61 aa)) is the SH3 domain. Low complexity predominate over residues 318 to 339 (ASTILHTPPTSSSSSSSSSSSS). Disordered stretches follow at residues 318-638 (ASTI…NIPV), 691-771 (LGGQ…QQQQ), and 783-817 (LPPQNTNLSGKNLQRSSTSMLLNKLPPPPFSFNKN). Positions 340–358 (ILLTDNQPKLCSSTPRINN) are enriched in polar residues. The span at 359–391 (SPSSFSPSLSSTTPQLLVQQSPRQSPRQIPSIS) shows a compositional bias: low complexity. Residues 396–438 (PNNTNQPSFGHGTLQRTSTGYFSSKPLSISQPINMSKPTNMSP) are compositionally biased toward polar residues. The segment covering 461–471 (PPLPTKPPPLT) has biased composition (pro residues). The segment covering 472-498 (IPSSSSLPTTPIKQQPQQPIQQPLTPQ) has biased composition (low complexity). The segment covering 509–532 (LSSSVNTANTGNCANILSPNSDRY) has biased composition (polar residues). 3 stretches are compositionally biased toward low complexity: residues 534-568 (SSRSQSSVHLSGSSSSSSSSSSSSSSSSSSSSSTS), 577-587 (KSKSSKNSPSK), and 607-624 (ITTTTTTTTTTTTTTIAT). Residues 625–635 (TPPPPSKPLPN) show a composition bias toward pro residues. Residues 705–722 (KSQSSYLDNNNLPSRNTN) are compositionally biased toward polar residues. Residues 725–734 (NLPPRPPPLN) show a composition bias toward pro residues. Composition is skewed to low complexity over residues 735-744 (IPQQQQQYKP) and 752-771 (QSPQSSLNQSLQIPLQQQQQ). Over residues 785 to 803 (PQNTNLSGKNLQRSSTSML) the composition is skewed to polar residues. Residues 807-817 (LPPPPFSFNKN) are compositionally biased toward pro residues.

It localises to the cytoplasm. Functionally, rho GTPase-activating protein involved in the signal transduction pathway. This chain is Rho GTPase-activating protein gacII (gacII), found in Dictyostelium discoideum (Social amoeba).